The following is a 266-amino-acid chain: Indole-3-glycerol phosphate synthase (266 aa).

Belongs to the TrpC family.

The enzyme catalyses 1-(2-carboxyphenylamino)-1-deoxy-D-ribulose 5-phosphate + H(+) = (1S,2R)-1-C-(indol-3-yl)glycerol 3-phosphate + CO2 + H2O. It participates in amino-acid biosynthesis; L-tryptophan biosynthesis; L-tryptophan from chorismate: step 4/5. The protein is Indole-3-glycerol phosphate synthase of Acidovorax sp. (strain JS42).